Consider the following 299-residue polypeptide: Probable xyloglucan endotransglucosylase/hydrolase protein 10 (299 aa).

The signal sequence occupies residues 1–29 (MTLINRSKPFVLLVGFSIISSLLLWVSQA). A GH16 domain is found at 30–225 (SVVSSGDFNK…WSKGPFVASF (196 aa)). A glycan (N-linked (GlcNAc...) asparagine) is linked at N51. The active-site Nucleophile is E111. The active-site Proton donor is the E115. Xyloglucan-binding positions include E115, 128–130 (QTN), 138–140 (NRE), 204–205 (SW), and G209. 2 disulfide bridges follow: C233/C242 and C280/C294. N238 carries N-linked (GlcNAc...) asparagine glycosylation. R285 contacts xyloglucan.

It belongs to the glycosyl hydrolase 16 family. XTH group 1 subfamily. In terms of processing, contains at least one intrachain disulfide bond essential for its enzymatic activity.

The protein localises to the secreted. It is found in the cell wall. Its subcellular location is the extracellular space. The protein resides in the apoplast. The enzyme catalyses breaks a beta-(1-&gt;4) bond in the backbone of a xyloglucan and transfers the xyloglucanyl segment on to O-4 of the non-reducing terminal glucose residue of an acceptor, which can be a xyloglucan or an oligosaccharide of xyloglucan.. Its function is as follows. Catalyzes xyloglucan endohydrolysis (XEH) and/or endotransglycosylation (XET). Cleaves and religates xyloglucan polymers, an essential constituent of the primary cell wall, and thereby participates in cell wall construction of growing tissues. This is Probable xyloglucan endotransglucosylase/hydrolase protein 10 (XTH10) from Arabidopsis thaliana (Mouse-ear cress).